A 111-amino-acid chain; its full sequence is Shuttling pre-60S factor C23B6.02c (111 aa).

2 stretches are compositionally biased toward basic residues: residues 1–12 (MAKKQSIRSRNF) and 59–73 (SKKKKNKKQTSKKAK). 2 disordered regions span residues 1–25 (MAKKQSIRSRNFRRSDPAYDLDSST) and 47–111 (ALRS…QGDE). Residues 83-111 (QAREERLDTKISKSLQKQEKLKARKQGDE) are compositionally biased toward basic and acidic residues.

The protein belongs to the ECM1 family. Associates with the pre-60S ribosomal particle and the nucleopore complex.

It is found in the nucleus. Its subcellular location is the nucleolus. It localises to the cytoplasm. Functionally, pre-ribosomal factor involved in 60S ribosomal protein subunit export from the nucleus. This Schizosaccharomyces pombe (strain 972 / ATCC 24843) (Fission yeast) protein is Shuttling pre-60S factor C23B6.02c.